Consider the following 269-residue polypeptide: Probable molybdenum ABC transporter permease protein HVO_B0370 (269 aa).

6 helical membrane-spanning segments follow: residues 26–46 (LLLAGVLLLYYLLPIGALVFA), 69–89 (VVAATLSTLVAVAFGVPLAYW), 100–120 (VILALVMLPLVLPPVVSGMLL), 140–160 (SLFGVVLAQTYVASPFLVVTA), 198–218 (ILAGVTLTFARAIGEFGATLM), and 243–263 (FPVALVLVGIAVGAILLVHAL). One can recognise an ABC transmembrane type-1 domain in the interval 65 to 258 (ATNSVVAATL…LVGIAVGAIL (194 aa)).

The protein belongs to the binding-protein-dependent transport system permease family. In terms of assembly, the complex is composed of two ATP-binding proteins, two transmembrane proteins (HVO_B0370) and a solute-binding protein (HVO_B0369).

The protein resides in the cell membrane. Functionally, part of an ABC transporter complex involved in molybdenum import. Responsible for the translocation of the substrate across the membrane. In Haloferax volcanii (strain ATCC 29605 / DSM 3757 / JCM 8879 / NBRC 14742 / NCIMB 2012 / VKM B-1768 / DS2) (Halobacterium volcanii), this protein is Probable molybdenum ABC transporter permease protein HVO_B0370.